A 510-amino-acid polypeptide reads, in one-letter code: Insulinoma-associated protein 1 (510 aa).

The segment covering 1 to 12 (MPRGFLVKRSKK) has biased composition (basic residues). Residues 1–20 (MPRGFLVKRSKKSTPVSYRV) form an SNAG domain region. 2 disordered regions span residues 1-110 (MPRG…SREH) and 176-226 (GAEA…PKAI). A required and sufficient for interaction with KDM1A region spans residues 2 to 7 (PRGFLV). Residues 43-58 (PPAPSPVPGPLPPPPP) are necessary for interaction with CCND1. The span at 43-59 (PPAPSPVPGPLPPPPPA) shows a compositional bias: pro residues. Low complexity-rich tracts occupy residues 64–74 (AALAAALACAP) and 209–218 (EPPAKAVKAP). Residues 267-287 (FICQLCKEEYADPFALAQHKC) form a C2H2-type 1; atypical zinc finger. The C2H2-type 2 zinc finger occupies 295–317 (YRCPECAKVFSCPANLASHRRWH). The interval 315 to 362 (RWHKPRPAPAAARAPEPEAAARAEAREAPGGGSDRDTPSPGGVSESGS) is disordered. Positions 329–351 (PEPEAAARAEAREAPGGGSDRDT) are enriched in basic and acidic residues. 3 C2H2-type zinc fingers span residues 367–389 (YECH…LLAH), 441–464 (HLCP…RLLH), and 469–492 (FPCK…NKCH).

The protein belongs to the INSM1 family. Interacts (via the SNAG domain) with HDAC1. Interacts (via the SNAG domain) with HDAC2. Interacts (via the SNAG domain) with KDM1A. Interacts (via the SNAG domain) with RCOR1. Interacts with SORBS1. Interacts (via the N-terminal region) with CCND1 (via cyclin N-terminal domain); the interaction competes with the binding of CCND1 to CDK4 during cell cycle progression and increases its transcriptional repressor activity. Interacts with HDAC3; the interaction increases its transcriptional repressor activity. Expressed in pancreatic duct cells. Expressed in several tumor cell lines of neuroendocrine origin including pheochromocytoma, medullary thyroid carcinoma, insulinoma, medulloblastoma, retinoblastoma, pheochromacytoma, medullary thyroid carcinoma and small cell lung carcinoma.

Its subcellular location is the nucleus. In terms of biological role, sequence-specific DNA-binding transcriptional regulator that plays a key role in neurogenesis and neuroendocrine cell differentiation during embryonic and/or fetal development. Binds to the consensus sequence 5'-[TG][TC][TC][TT][GA]GGG[CG]A-3' in target promoters. Acts as a transcriptional repressor of NEUROD1 and INS expression via its interaction with cyclin CCND1 in a cell cycle-independent manner. Negatively regulates skeletal muscle-specific gene expression in endocrine cells of the pituitary by inhibiting the Notch signaling pathway. Represses target gene transcription by recruiting chromatin-modifying factors, such as HDAC1, HDAC2, HDAC3, KDM1A and RCOR1 histone deacetylases. Binds to its own promoter, suggesting autoregulation as a self-control feedback mechanism. Competes with histone H3 for the same binding site on the histone demethylase complex formed by KDM1A and RCOR1, and thereby inhibits demethylation of histone H3 at 'Lys-4'. Promotes the generation and expansion of neuronal basal progenitor cells in the developing neocortex. Involved in the differentiation of endocrine cells of the developing anterior pituitary gland, of the pancreas and intestine, and of sympatho-adrenal cells in the peripheral nervous system. Promotes cell cycle signaling arrest and inhibition of cellular proliferation. This is Insulinoma-associated protein 1 (INSM1) from Homo sapiens (Human).